We begin with the raw amino-acid sequence, 153 residues long: Ribosomal RNA large subunit methyltransferase H (153 aa).

S-adenosyl-L-methionine is bound by residues Leu-75, Gly-102, and 121–126 (LSKLTL).

This sequence belongs to the RNA methyltransferase RlmH family. In terms of assembly, homodimer.

Its subcellular location is the cytoplasm. It carries out the reaction pseudouridine(1915) in 23S rRNA + S-adenosyl-L-methionine = N(3)-methylpseudouridine(1915) in 23S rRNA + S-adenosyl-L-homocysteine + H(+). Functionally, specifically methylates the pseudouridine at position 1915 (m3Psi1915) in 23S rRNA. This is Ribosomal RNA large subunit methyltransferase H from Campylobacter jejuni (strain RM1221).